The primary structure comprises 215 residues: MSKAIVLDSHLKEKGSVELPKRYEGINSHNLYLYVKHYLSSARANTAKSKNRAEVSGGGRKPWAQKGGGRARAGSITSPVFVGGGVSHGATNNRNYNLKINKKQKRLALEYALEEKAQANKLFVVEKIAIKGVVEDNKRKHLTKEANQMFQALEQRDTLFVCMNMDEYTELAFSNLKKCLIIDVSELNAYLLAAFSSVVMEEAAFQHVVQDKTEE.

The tract at residues threonine 46–arginine 72 is disordered. Gly residues predominate over residues serine 56 to alanine 71.

Belongs to the universal ribosomal protein uL4 family. Part of the 50S ribosomal subunit.

Its function is as follows. One of the primary rRNA binding proteins, this protein initially binds near the 5'-end of the 23S rRNA. It is important during the early stages of 50S assembly. It makes multiple contacts with different domains of the 23S rRNA in the assembled 50S subunit and ribosome. Forms part of the polypeptide exit tunnel. In Helicobacter pylori (strain Shi470), this protein is Large ribosomal subunit protein uL4.